Reading from the N-terminus, the 480-residue chain is Sestrin-2 (480 aa).

Methionine 1 is modified (N-acetylmethionine). The disordered stretch occupies residues 20–45; the sequence is PGGVGDSGPGEEQRESRARRGPRGPS. The tract at residues 66-239 is N-terminal domain; mediates the alkylhydroperoxide reductase activity; that stretch reads GLEALMSSGR…APTPPSEQSS (174 aa). Cysteine 125 functions as the Cysteine sulfenic acid (-SOH) intermediate in the catalytic mechanism. Residue lysine 175 forms a Glycyl lysine isopeptide (Lys-Gly) (interchain with G-Cter in ubiquitin) linkage. Disordered stretches follow at residues 222–252 and 272–291; these read ADGS…SGGF and LLRD…ELEK. Position 249 is a phosphoserine (serine 249). The tract at residues 308–480 is C-terminal domain; mediates TORC1 regulation; the sequence is PHPDMLCFVE…ALRAITRYMT (173 aa). Residues 374–377, threonine 386, and glutamate 451 contribute to the L-leucine site; that span reads TYNT.

This sequence belongs to the sestrin family. In terms of assembly, interacts with the GATOR2 complex which is composed of MIOS, SEC13, SEH1L, WDR24 and WDR59; the interaction is negatively regulated by leucine. Conveys leucine availability via direct interaction with SEH1L and WDR24 components of the GATOR2 complex. Interacts with RRAGA, RRAGB, RRAGC and RRAGD; may function as a guanine nucleotide dissociation inhibitor for RRAGs and regulate them. May interact with the TORC2 complex. Interacts with KEAP1, RBX1, SQSTM and ULK1; to regulate the degradation of KEAP1. May also associate with the complex composed of TSC1, TSC2 and the AMP-responsive protein kinase/AMPK to regulate TORC1 signaling. May interact with PRDX1. Post-translationally, phosphorylated by ULK1 at multiple sites. In terms of processing, ubiquitinated at Lys-175 by RNF167 via 'Lys-63'-linked polyubiquitination in response to leucine deprivation: ubiquitination promotes SESN2-interaction with the GATOR2 complex, leading to inhibit the TORC1 signaling pathway. Deubiquitinated at Lys-175 by STAMBPL1, promoting the TORC1 signaling pathway. Ubiquitinated by RNF186; ubiquitination mediates proteasomal degradation. As to expression, widely expressed.

The protein resides in the cytoplasm. It carries out the reaction a hydroperoxide + L-cysteinyl-[protein] = S-hydroxy-L-cysteinyl-[protein] + an alcohol. Functionally, functions as an intracellular leucine sensor that negatively regulates the mTORC1 signaling pathway through the GATOR complex. In absence of leucine, binds the GATOR subcomplex GATOR2 and prevents mTORC1 signaling. Binding of leucine to SESN2 disrupts its interaction with GATOR2 thereby activating the TORC1 signaling pathway. This stress-inducible metabolic regulator also plays a role in protection against oxidative and genotoxic stresses. May negatively regulate protein translation in response to endoplasmic reticulum stress, via mTORC1. May positively regulate the transcription by NFE2L2 of genes involved in the response to oxidative stress by facilitating the SQSTM1-mediated autophagic degradation of KEAP1. May also mediate TP53 inhibition of TORC1 signaling upon genotoxic stress. Moreover, may prevent the accumulation of reactive oxygen species (ROS) through the alkylhydroperoxide reductase activity born by the N-terminal domain of the protein. Was originally reported to contribute to oxidative stress resistance by reducing PRDX1. However, this could not be confirmed. The sequence is that of Sestrin-2 from Homo sapiens (Human).